The primary structure comprises 558 residues: 2-isopropylmalate synthase (558 aa).

The region spanning 30-303 (PIWCSVDLRD…DPELDCRDIE (274 aa)) is the Pyruvate carboxyltransferase domain. Mg(2+) contacts are provided by Asp-39, His-242, His-244, and Asn-278. The segment at 437–558 (QPNARIKFVD…ANRVLEERAK (122 aa)) is regulatory domain.

It belongs to the alpha-IPM synthase/homocitrate synthase family. LeuA type 2 subfamily. In terms of assembly, homodimer. Requires Mg(2+) as cofactor.

The protein localises to the cytoplasm. It carries out the reaction 3-methyl-2-oxobutanoate + acetyl-CoA + H2O = (2S)-2-isopropylmalate + CoA + H(+). It participates in amino-acid biosynthesis; L-leucine biosynthesis; L-leucine from 3-methyl-2-oxobutanoate: step 1/4. Functionally, catalyzes the condensation of the acetyl group of acetyl-CoA with 3-methyl-2-oxobutanoate (2-ketoisovalerate) to form 3-carboxy-3-hydroxy-4-methylpentanoate (2-isopropylmalate). The protein is 2-isopropylmalate synthase of Agrobacterium fabrum (strain C58 / ATCC 33970) (Agrobacterium tumefaciens (strain C58)).